The following is a 1320-amino-acid chain: Stress response protein NST1 (1320 aa).

The segment covering 1-22 (MPSGSKSKKKKSKSKGGVKKHA) has biased composition (basic residues). 4 disordered regions span residues 1–85 (MPSG…EVSE), 541–598 (TNSG…EDSI), 656–766 (MKKK…EELE), and 1048–1073 (ESPA…KTPL). Residues 33–42 (EIMDERDESD) show a composition bias toward acidic residues. Residues 541 to 555 (TNSGNINHSDNYESN) are compositionally biased toward polar residues. Positions 579–590 (NYSDHGKDHGTI) are enriched in basic and acidic residues. Residues 637–807 (EKEADSNRLK…TELAMSMKEN (171 aa)) are a coiled coil.

Belongs to the NST1 family.

The protein localises to the cytoplasm. Functionally, may act as a negative regulator of salt tolerance. This is Stress response protein NST1 (NST1) from Candida glabrata (strain ATCC 2001 / BCRC 20586 / JCM 3761 / NBRC 0622 / NRRL Y-65 / CBS 138) (Yeast).